The primary structure comprises 299 residues: ATP phosphoribosyltransferase (299 aa).

Belongs to the ATP phosphoribosyltransferase family. Long subfamily. Mg(2+) serves as cofactor.

It localises to the cytoplasm. It catalyses the reaction 1-(5-phospho-beta-D-ribosyl)-ATP + diphosphate = 5-phospho-alpha-D-ribose 1-diphosphate + ATP. The protein operates within amino-acid biosynthesis; L-histidine biosynthesis; L-histidine from 5-phospho-alpha-D-ribose 1-diphosphate: step 1/9. Feedback inhibited by histidine. Functionally, catalyzes the condensation of ATP and 5-phosphoribose 1-diphosphate to form N'-(5'-phosphoribosyl)-ATP (PR-ATP). Has a crucial role in the pathway because the rate of histidine biosynthesis seems to be controlled primarily by regulation of HisG enzymatic activity. This is ATP phosphoribosyltransferase from Mannheimia succiniciproducens (strain KCTC 0769BP / MBEL55E).